We begin with the raw amino-acid sequence, 284 residues long: 4-diphosphocytidyl-2-C-methyl-D-erythritol kinase (284 aa).

Lys14 is an active-site residue. Residue 98 to 108 participates in ATP binding; it reads PMGGGLGGGSS. Asp140 is a catalytic residue.

Belongs to the GHMP kinase family. IspE subfamily.

The enzyme catalyses 4-CDP-2-C-methyl-D-erythritol + ATP = 4-CDP-2-C-methyl-D-erythritol 2-phosphate + ADP + H(+). Its pathway is isoprenoid biosynthesis; isopentenyl diphosphate biosynthesis via DXP pathway; isopentenyl diphosphate from 1-deoxy-D-xylulose 5-phosphate: step 3/6. Functionally, catalyzes the phosphorylation of the position 2 hydroxy group of 4-diphosphocytidyl-2C-methyl-D-erythritol. This Shewanella baltica (strain OS185) protein is 4-diphosphocytidyl-2-C-methyl-D-erythritol kinase.